A 363-amino-acid chain; its full sequence is Membrane-bound lytic murein transglycosylase C (363 aa).

An N-terminal signal peptide occupies residues 1 to 15 (MKKYIVFAIIPFLFA). Residue Cys-16 is the site of N-palmitoyl cysteine attachment. Cys-16 carries S-diacylglycerol cysteine lipidation.

Belongs to the transglycosylase Slt family.

Its subcellular location is the cell outer membrane. It carries out the reaction Exolytic cleavage of the (1-&gt;4)-beta-glycosidic linkage between N-acetylmuramic acid (MurNAc) and N-acetylglucosamine (GlcNAc) residues in peptidoglycan, from either the reducing or the non-reducing ends of the peptidoglycan chains, with concomitant formation of a 1,6-anhydrobond in the MurNAc residue.. Its function is as follows. Murein-degrading enzyme. May play a role in recycling of muropeptides during cell elongation and/or cell division. This chain is Membrane-bound lytic murein transglycosylase C, found in Histophilus somni (strain 129Pt) (Haemophilus somnus).